Reading from the N-terminus, the 162-residue chain is NADH-quinone oxidoreductase subunit I (162 aa).

2 consecutive 4Fe-4S ferredoxin-type domains span residues 53–83 (LRRYPNGEERCIACKLCEAICPAQAITIEPE) and 93–122 (RRYDLDMTKCIYCGLCQEACPVDAIVEGPN). Residues Cys63, Cys66, Cys69, Cys73, Cys102, Cys105, Cys108, and Cys112 each contribute to the [4Fe-4S] cluster site.

This sequence belongs to the complex I 23 kDa subunit family. In terms of assembly, NDH-1 is composed of 14 different subunits. Subunits NuoA, H, J, K, L, M, N constitute the membrane sector of the complex. It depends on [4Fe-4S] cluster as a cofactor.

It localises to the cell inner membrane. The enzyme catalyses a quinone + NADH + 5 H(+)(in) = a quinol + NAD(+) + 4 H(+)(out). In terms of biological role, NDH-1 shuttles electrons from NADH, via FMN and iron-sulfur (Fe-S) centers, to quinones in the respiratory chain. The immediate electron acceptor for the enzyme in this species is believed to be ubiquinone. Couples the redox reaction to proton translocation (for every two electrons transferred, four hydrogen ions are translocated across the cytoplasmic membrane), and thus conserves the redox energy in a proton gradient. The polypeptide is NADH-quinone oxidoreductase subunit I (Paramagnetospirillum magneticum (strain ATCC 700264 / AMB-1) (Magnetospirillum magneticum)).